We begin with the raw amino-acid sequence, 276 residues long: Small ribosomal subunit protein uS2 (276 aa).

The tract at residues 255–276 (ASATATAAPTEAGAPEPTTDPS) is disordered.

Belongs to the universal ribosomal protein uS2 family.

The protein is Small ribosomal subunit protein uS2 of Mycolicibacterium paratuberculosis (strain ATCC BAA-968 / K-10) (Mycobacterium paratuberculosis).